The sequence spans 339 residues: DNA-directed RNA polymerase subunit alpha (339 aa).

Residues 1 to 233 form an alpha N-terminal domain (alpha-NTD) region; that stretch reads MVREEVAGST…DLFLPFLHAE (233 aa). The segment at 264 to 339 is alpha C-terminal domain (alpha-CTD); that stretch reads KKGIPLNSIF…IDLLKNKLSF (76 aa).

The protein belongs to the RNA polymerase alpha chain family. In plastids the minimal PEP RNA polymerase catalytic core is composed of four subunits: alpha, beta, beta', and beta''. When a (nuclear-encoded) sigma factor is associated with the core the holoenzyme is formed, which can initiate transcription.

The protein resides in the plastid. It is found in the chloroplast. The enzyme catalyses RNA(n) + a ribonucleoside 5'-triphosphate = RNA(n+1) + diphosphate. Its function is as follows. DNA-dependent RNA polymerase catalyzes the transcription of DNA into RNA using the four ribonucleoside triphosphates as substrates. The chain is DNA-directed RNA polymerase subunit alpha from Aegilops tauschii (Tausch's goatgrass).